The chain runs to 213 residues: Redox-sensing transcriptional repressor Rex (213 aa).

Residues 17-56 (LYYRIFKRFHSENIEKASSKQIAEAIGIDSATVRRDFSYF) constitute a DNA-binding region (H-T-H motif). NAD(+) is bound at residue 91–96 (GVGNIG).

Belongs to the transcriptional regulatory Rex family. As to quaternary structure, homodimer.

It localises to the cytoplasm. Modulates transcription in response to changes in cellular NADH/NAD(+) redox state. The sequence is that of Redox-sensing transcriptional repressor Rex from Streptococcus mutans serotype c (strain ATCC 700610 / UA159).